A 640-amino-acid polypeptide reads, in one-letter code: Threonine--tRNA ligase (640 aa).

A TGS domain is found at 1–59 (MKIKVKLPDGKEKEYDRGITPAEIAKELGVKKAIGAVVNGELWDLKRPIENDCELRLVT). The segment at 240–531 (DHRKLGPHLE…LIEHFAGAFP (292 aa)) is catalytic. Positions 332, 383, and 508 each coordinate Zn(2+).

The protein belongs to the class-II aminoacyl-tRNA synthetase family. In terms of assembly, homodimer. Zn(2+) is required as a cofactor.

The protein localises to the cytoplasm. It carries out the reaction tRNA(Thr) + L-threonine + ATP = L-threonyl-tRNA(Thr) + AMP + diphosphate + H(+). In terms of biological role, catalyzes the attachment of threonine to tRNA(Thr) in a two-step reaction: L-threonine is first activated by ATP to form Thr-AMP and then transferred to the acceptor end of tRNA(Thr). Also edits incorrectly charged L-seryl-tRNA(Thr). This is Threonine--tRNA ligase from Thermotoga petrophila (strain ATCC BAA-488 / DSM 13995 / JCM 10881 / RKU-1).